The primary structure comprises 127 residues: UPF0102 protein SYNAS_23220 (127 aa).

The protein belongs to the UPF0102 family.

This chain is UPF0102 protein SYNAS_23220, found in Syntrophus aciditrophicus (strain SB).